A 100-amino-acid polypeptide reads, in one-letter code: NADH-quinone oxidoreductase subunit K (100 aa).

3 helical membrane-spanning segments follow: residues 2–22 (IGLT…LVGI), 29–49 (IMLF…LAAI), and 60–80 (IIAF…LGLL).

It belongs to the complex I subunit 4L family. NDH-1 is composed of 14 different subunits. Subunits NuoA, H, J, K, L, M, N constitute the membrane sector of the complex.

It is found in the cell inner membrane. It carries out the reaction a quinone + NADH + 5 H(+)(in) = a quinol + NAD(+) + 4 H(+)(out). Functionally, NDH-1 shuttles electrons from NADH, via FMN and iron-sulfur (Fe-S) centers, to quinones in the respiratory chain. The immediate electron acceptor for the enzyme in this species is believed to be ubiquinone. Couples the redox reaction to proton translocation (for every two electrons transferred, four hydrogen ions are translocated across the cytoplasmic membrane), and thus conserves the redox energy in a proton gradient. The chain is NADH-quinone oxidoreductase subunit K from Campylobacter concisus (strain 13826).